We begin with the raw amino-acid sequence, 707 residues long: Heat shock protein hsp88 (707 aa).

Over residues 662-692 the composition is skewed to basic and acidic residues; it reads EAEKAAKKAEEEARKAKEAAEKAAQEGAKDD. The interval 662–707 is disordered; that stretch reads EAEKAAKKAEEEARKAKEAAEKAAQEGAKDDEMTDADAPKPVVEEA.

It belongs to the heat shock protein 70 family. Binds hsp30 independent of temperature or substrate. The N-terminus is blocked.

Its subcellular location is the cytoplasm. The protein is Heat shock protein hsp88 (hsp88) of Neurospora crassa (strain ATCC 24698 / 74-OR23-1A / CBS 708.71 / DSM 1257 / FGSC 987).